Reading from the N-terminus, the 245-residue chain is Orotidine 5'-phosphate decarboxylase (245 aa).

Substrate-binding positions include Asp-22, Lys-44, 71–80 (DLKFHDIPNT), Thr-131, Arg-192, Gln-201, Gly-221, and Arg-222. Lys-73 serves as the catalytic Proton donor.

This sequence belongs to the OMP decarboxylase family. Type 1 subfamily. In terms of assembly, homodimer.

It carries out the reaction orotidine 5'-phosphate + H(+) = UMP + CO2. It functions in the pathway pyrimidine metabolism; UMP biosynthesis via de novo pathway; UMP from orotate: step 2/2. Functionally, catalyzes the decarboxylation of orotidine 5'-monophosphate (OMP) to uridine 5'-monophosphate (UMP). The polypeptide is Orotidine 5'-phosphate decarboxylase (Shigella boydii serotype 18 (strain CDC 3083-94 / BS512)).